Reading from the N-terminus, the 212-residue chain is 3-oxo-tetronate 4-phosphate decarboxylase (212 aa).

The active-site Proton acceptor is Glu79. Residues Glu79, His98, and His100 each coordinate Zn(2+). The Proton donor role is filled by Tyr125. His165 is a Zn(2+) binding site.

This sequence belongs to the aldolase class II family. AraD/FucA subfamily. Zn(2+) is required as a cofactor.

The enzyme catalyses 3-dehydro-4-O-phospho-D-erythronate + H(+) = dihydroxyacetone phosphate + CO2. It carries out the reaction 3-dehydro-4-O-phospho-L-erythronate + H(+) = dihydroxyacetone phosphate + CO2. Its function is as follows. Catalyzes the decarboxylation of 3-oxo-tetronate 4-phosphate to dihydroxyacetone phosphate (DHAP) and CO(2). The chain is 3-oxo-tetronate 4-phosphate decarboxylase from Escherichia coli (strain K12).